Consider the following 245-residue polypeptide: Phycocyanobilin:ferredoxin oxidoreductase (245 aa).

Belongs to the HY2 family.

The catalysed reaction is (2R,3Z)-phycocyanobilin + 4 oxidized [2Fe-2S]-[ferredoxin] = biliverdin IXalpha + 4 reduced [2Fe-2S]-[ferredoxin] + 4 H(+). Functionally, catalyzes the four-electron reduction of biliverdin IX-alpha (2-electron reduction at both the A and D rings); the reaction proceeds via an isolatable 2-electron intermediate, 181,182-dihydrobiliverdin. This chain is Phycocyanobilin:ferredoxin oxidoreductase, found in Trichodesmium erythraeum (strain IMS101).